We begin with the raw amino-acid sequence, 235 residues long: NADH-quinone oxidoreductase subunit C (235 aa).

This sequence belongs to the complex I 30 kDa subunit family. NDH-1 is composed of 14 different subunits. Subunits NuoB, C, D, E, F, and G constitute the peripheral sector of the complex.

The protein resides in the cell membrane. The enzyme catalyses a quinone + NADH + 5 H(+)(in) = a quinol + NAD(+) + 4 H(+)(out). Its function is as follows. NDH-1 shuttles electrons from NADH, via FMN and iron-sulfur (Fe-S) centers, to quinones in the respiratory chain. The immediate electron acceptor for the enzyme in this species is believed to be a menaquinone. Couples the redox reaction to proton translocation (for every two electrons transferred, four hydrogen ions are translocated across the cytoplasmic membrane), and thus conserves the redox energy in a proton gradient. In Mycolicibacterium paratuberculosis (strain ATCC BAA-968 / K-10) (Mycobacterium paratuberculosis), this protein is NADH-quinone oxidoreductase subunit C.